Consider the following 312-residue polypeptide: Tyrosine recombinase XerC (312 aa).

One can recognise a Core-binding (CB) domain in the interval methionine 1–valine 103. A Tyr recombinase domain is found at glutamate 124–glutamine 306. Active-site residues include arginine 164, lysine 188, histidine 258, arginine 261, and histidine 284. Tyrosine 293 acts as the O-(3'-phospho-DNA)-tyrosine intermediate in catalysis.

Belongs to the 'phage' integrase family. XerC subfamily. As to quaternary structure, forms a cyclic heterotetrameric complex composed of two molecules of XerC and two molecules of XerD.

The protein localises to the cytoplasm. Its function is as follows. Site-specific tyrosine recombinase, which acts by catalyzing the cutting and rejoining of the recombining DNA molecules. The XerC-XerD complex is essential to convert dimers of the bacterial chromosome into monomers to permit their segregation at cell division. It also contributes to the segregational stability of plasmids. This Chlamydia pneumoniae (Chlamydophila pneumoniae) protein is Tyrosine recombinase XerC.